A 279-amino-acid polypeptide reads, in one-letter code: Secreted RxLR effector protein 90 (279 aa).

A signal peptide spans 1–19; sequence MKSAAAFATFLTLSVFVAT. A RxLR-dEER motif is present at residues 29–46; that stretch reads RGLRSLADNQSTESSEGR. 2 disordered regions span residues 29–53 and 135–176; these read RGLR…YNHH and ATPA…NLAG. N-linked (GlcNAc...) asparagine glycosylation occurs at Asn37. Residues 135–146 are compositionally biased toward low complexity; sequence ATPAPTTSVPSS. Over residues 147–163 the composition is skewed to polar residues; it reads LVNTDTSDNQLPTTPVA. A compositionally biased stretch (gly residues) spans 166 to 176; sequence QGGGIGSNLAG. N-linked (GlcNAc...) asparagine glycosylation occurs at Asn217.

This sequence belongs to the RxLR effector family.

It is found in the secreted. It localises to the host cell membrane. In terms of biological role, secreted effector that completely suppresses the host cell death induced by cell death-inducing proteins. This chain is Secreted RxLR effector protein 90, found in Plasmopara viticola (Downy mildew of grapevine).